A 274-amino-acid chain; its full sequence is Large ribosomal subunit protein uL2 (274 aa).

2 disordered regions span residues 28-55 (APHA…RHVG) and 224-274 (VAMN…RRRK). A compositionally biased stretch (basic and acidic residues) spans 263 to 274 (KRTDKMIVRRRK).

Belongs to the universal ribosomal protein uL2 family. Part of the 50S ribosomal subunit. Forms a bridge to the 30S subunit in the 70S ribosome.

Its function is as follows. One of the primary rRNA binding proteins. Required for association of the 30S and 50S subunits to form the 70S ribosome, for tRNA binding and peptide bond formation. It has been suggested to have peptidyltransferase activity; this is somewhat controversial. Makes several contacts with the 16S rRNA in the 70S ribosome. This is Large ribosomal subunit protein uL2 from Pseudomonas fluorescens (strain ATCC BAA-477 / NRRL B-23932 / Pf-5).